The sequence spans 466 residues: 23S rRNA (uracil(1939)-C(5))-methyltransferase RlmD (466 aa).

The region spanning Met1–Glu54 is the TRAM domain. [4Fe-4S] cluster is bound by residues Cys67, Cys73, Cys76, and Cys155. The S-adenosyl-L-methionine site is built by Gln264, Phe293, Asn298, Glu314, Asn342, and Asp363. Cys393 (nucleophile) is an active-site residue.

It belongs to the class I-like SAM-binding methyltransferase superfamily. RNA M5U methyltransferase family. RlmD subfamily.

The enzyme catalyses uridine(1939) in 23S rRNA + S-adenosyl-L-methionine = 5-methyluridine(1939) in 23S rRNA + S-adenosyl-L-homocysteine + H(+). In terms of biological role, catalyzes the formation of 5-methyl-uridine at position 1939 (m5U1939) in 23S rRNA. In Bordetella parapertussis (strain 12822 / ATCC BAA-587 / NCTC 13253), this protein is 23S rRNA (uracil(1939)-C(5))-methyltransferase RlmD.